The sequence spans 449 residues: Baeyer-Villiger oxidase GME11358 (449 aa).

The protein belongs to the questin oxidase family.

It functions in the pathway secondary metabolite biosynthesis. In terms of biological role, baeyer-Villiger oxidase; part of the gene cluster that mediates the biosynthesis of dibenzodioxocinones such as pestalotiollide B, a novel class of inhibitors against cholesterol ester transfer protein (CEPT). The biosynthesis initiates from condensation of acetate and malonate units catalyzed by the non-reducing PKS pks8/GME11356. Pks8/GME11356 lacks a thioesterase (TE) domain, which is important to the cyclizing of the third ring of atrochrysone carboxylic acid, and the esterase GME11355 might play the role of TE and catalyzes the cyclization reaction of the C ring. The lactamase-like protein GME11357 (or other beta-lactamases in Pestalotiopsis microspora) probably hydrolyzes the thioester bond between the ACP of pks8/GME11356 and the intermediate to release atrochrysone carboxylic acid, which is spontaneously dehydrates to form endocrocin anthrone. Endocrocin anthrone is further converted to emodin via the endocrocin intermediate. Emodin is then oxidized by several enzymes such as the Baeyer-Villiger oxidase GME11358, the oxidoreductase GME11367, the short chain dehydrogenase/reductase GME11373, as well as by other oxidoreductases from the cluster, to modify the A and C rings and open the B ring, and finally yield monodictyphenone. The prenyltransferase GME11375 may catalyze the addition reaction between the C5 side chains and the carbon bone of dibenzodioxocinones. The remaining biochemical reactions to the final product dibenzodioxocinones should be methylation catalyzed by methyltransferase GME11366 and reduction and lactonization reaction catalyzed by a series of oxidordeuctases. This is Baeyer-Villiger oxidase GME11358 from Pestalotiopsis microspora.